Here is a 220-residue protein sequence, read N- to C-terminus: Nitrile hydratase subunit beta (220 aa).

It belongs to the nitrile hydratase subunit beta family. In terms of assembly, heterodimer of an alpha and a beta chain.

The enzyme catalyses an aliphatic primary amide = an aliphatic nitrile + H2O. Functionally, NHase catalyzes the hydration of various nitrile compounds to the corresponding amides. The protein is Nitrile hydratase subunit beta (nthB) of Pseudomonas chlororaphis (Pseudomonas aureofaciens).